A 1578-amino-acid chain; its full sequence is Neurexin-3 (1578 aa).

The first 27 residues, 1 to 27 (MSFTLHSVFFTLKVSSFLGSLVGLCLG), serve as a signal peptide directing secretion. Residues 28 to 202 (LEFMGLPNQW…SVQLEAEGPC (175 aa)) form the Laminin G-like 1 domain. Residues 28–1503 (LEFMGLPNQW…EVIRESNSTT (1476 aa)) are Extracellular-facing. 2 N-linked (GlcNAc...) asparagine glycosylation sites follow: Asn58 and Asn105. The 38-residue stretch at 198–235 (AEGPCGERPCENGGICFLLDGHPTCDCSTTGYGGTLCS) folds into the EGF-like 1 domain. 3 disulfides stabilise this stretch: Cys202–Cys213, Cys207–Cys222, and Cys224–Cys234. Laminin G-like domains are found at residues 260-444 (ENVA…VFKC) and 451-643 (DPIN…KSSC). Asp308, Leu325, and Met378 together coordinate Ca(2+). 5 disulfide bridges follow: Cys408–Cys444, Cys614–Cys643, Cys651–Cys662, Cys656–Cys671, and Cys673–Cys683. The region spanning 647-684 (SAKQCDSYPCKNNAVCKDGWNRFICDCTGTGYWGRTCE) is the EGF-like 2 domain. Laminin G-like domains follow at residues 689 to 861 (ILSY…IDYC) and 875 to 1050 (DPVT…DRGC). The Ca(2+) site is built by Asp736 and Leu753. N-linked (GlcNAc...) asparagine glycosylation is present at Asn761. Residue Arg811 participates in Ca(2+) binding. 4 cysteine pairs are disulfide-bonded: Cys1022/Cys1050, Cys1057/Cys1068, Cys1062/Cys1077, and Cys1079/Cys1089. The EGF-like 3 domain maps to 1053–1090 (PSTTCQEDSCANQGVCMQQWEGFTCDCSMTSYSGNQCN). The Laminin G-like 6 domain maps to 1094–1294 (ATYIFGKSGG…NPNIKINGSV (201 aa)). 2 residues coordinate Ca(2+): Asp1146 and Ile1163. N-linked (GlcNAc...) asparagine glycosylation is present at Asn1193. Ile1245 and Asn1247 together coordinate Ca(2+). N-linked (GlcNAc...) asparagine glycans are attached at residues Asn1291 and Asn1335. Residues 1328-1352 (ATTTTRKNRSTASIQPTSDDLVSSA) form a disordered region. Positions 1337–1352 (STASIQPTSDDLVSSA) are enriched in polar residues. O-linked (Xyl...) (heparan sulfate) serine glycosylation occurs at Ser1351. N-linked (GlcNAc...) asparagine glycosylation occurs at Asn1500. Residues 1504–1524 (GMVVGIVAAAALCILILLYAM) form a helical membrane-spanning segment. Residues 1525–1578 (YKYRNRDEGSYQVDETRNYISNSAQSNGTLMKEKQASSKSGHKKQKNKDKEYYV) lie on the Cytoplasmic side of the membrane. Residues 1546–1578 (NSAQSNGTLMKEKQASSKSGHKKQKNKDKEYYV) are disordered.

The protein belongs to the neurexin family. As to quaternary structure, the laminin G-like domain 2 binds to NXPH1. Isoform 8/alpha-4B binds to alpha-dystroglycan. The cytoplasmic C-terminal region binds to CASK. Specific isoforms bind neuroligins NLGN1, NLGN2 and NLGN3. Interacts with CLSTN3. O-glycosylated; contains heparan sulfate. Heparan sulfate attachment is required for synapse development by mediating interactions with neuroligins. In terms of tissue distribution, brain.

The protein localises to the presynaptic cell membrane. Its function is as follows. Neuronal cell surface protein that may be involved in cell recognition and cell adhesion. May mediate intracellular signaling. The polypeptide is Neurexin-3 (Nrxn3) (Rattus norvegicus (Rat)).